A 503-amino-acid polypeptide reads, in one-letter code: MEEFQGYFELDRSRQDDFLYPLIFREYIYALAHDHGLNRSILFENAGYYNKSSSIIVKRLITRIYQQNPLIFSANDSIQNQFFGHNKNLYSQIISEGFAVIVEIPFSLRLVSSLERKQXAKSHNLRSIHXIFPFLEDKFSHLDYVSAVLIPYHIHLEIVVQTLRYWVKDASSLHLLRFFLHEYWNSLITPKKHITIFSKGNPRLFLFLYNXHICEYESIFLFLRNQSSHLRSTSSGIFFERIHFYVKIEDFVKVLFENDFQCILWFFKDPFMHYVRYQGKLILASKDTPLLMNKWKYYLVNLWQYHFYAWFQPGRIDINQLCKYSLDFLGYRLSVRLNSSVVRSQMLENSFLINNTMKKFETIVPIIPLIGSLSKANFCNTLGHPISKPTRADSSDSDIIDRFLRICRNLSHYHSGSSKKKSLYRVKYILRLSCVKTLARKHKRTVRTFLKRLGSEFLEEFLTEEEVVLSLIFHRTYSTSRRLYRGQIWYLDITSINDLVNYE.

It belongs to the intron maturase 2 family. MatK subfamily.

It is found in the plastid. The protein resides in the chloroplast. Functionally, usually encoded in the trnK tRNA gene intron. Probably assists in splicing its own and other chloroplast group II introns. The sequence is that of Maturase K from Callistemon polandii (Gold-tipped bottlebrush).